A 176-amino-acid polypeptide reads, in one-letter code: F(420)H(2) dehydrogenase subunit J (176 aa).

A run of 5 helical transmembrane segments spans residues 13–33, 39–59, 64–84, 99–119, and 140–160; these read TAVF…VVIA, AGLA…LLNA, VIQV…AVML, PLAF…AFGT, and IGML…IVLL.

It belongs to the complex I subunit 6 family. In terms of assembly, the FPO complex is composed of at least 13 different subunits. FpoA, FpoH, FpoJ, FpoK, FpoL, FpoM and FpoN proteins constitute the membrane sector of the complex.

It localises to the cell membrane. The enzyme catalyses methanophenazine + reduced coenzyme F420-(gamma-L-Glu)(n) = dihydromethanophenazine + oxidized coenzyme F420-(gamma-L-Glu)(n) + H(+). Functionally, component of the F(420)H(2) dehydrogenase (FPO complex) which is part of the energy-conserving F(420)H(2):heterodisulfide oxidoreductase system. The membrane-bound electron transfer system of the complex plays an important role in the metabolism of methylotrophic methanogens when the organisms grow on methanol or methylamines. Catalyzes the oxidation of methanophenazine to dihydromethanophenazine. It shuttles electrons from F(420)H(2), via FAD and iron-sulfur (Fe-S) centers, to methanophenazine (an electron carrier in the membrane). It couples the redox reaction to proton translocation (for every two electrons transferred, two hydrogen ions are translocated across the cytoplasmic membrane), and thus conserves the redox energy in a proton gradient. It also catalyzes the oxidation of F(420)H(2) with quinones such as 2,3-dimethyl-1,4-naphthoquinone, 2-methyl-1,4-naphthoquinone and tetramethyl-p-benzoquinone. The sequence is that of F(420)H(2) dehydrogenase subunit J (fpoJ) from Methanosarcina mazei (strain ATCC BAA-159 / DSM 3647 / Goe1 / Go1 / JCM 11833 / OCM 88) (Methanosarcina frisia).